A 65-amino-acid chain; its full sequence is Protein translocase subunit SecE (65 aa).

Over 1 to 34 (MEKLRKFFREVIAEAKKISWPSRKELLTSFGVVL) the chain is Cytoplasmic. Residues 35 to 51 (VILAVTSVYFFVLDFIF) form a helical membrane-spanning segment. The Extracellular segment spans residues 52–65 (SGVVSAIFKALGIG).

Belongs to the SecE/SEC61-gamma family. In terms of assembly, component of the Sec protein translocase complex. Heterotrimer consisting of SecY, SecE and SecG subunits. The heterotrimers can form oligomers, although 1 heterotrimer is thought to be able to translocate proteins. Interacts with SecDF, and other proteins may be involved. The channel interacts with SecA via subunit SecY.

The protein localises to the cell inner membrane. Functionally, essential subunit of the protein translocation channel SecYEG. Clamps together the 2 halves of SecY. May contact the channel plug during translocation. The protein is Protein translocase subunit SecE of Thermotoga maritima (strain ATCC 43589 / DSM 3109 / JCM 10099 / NBRC 100826 / MSB8).